A 187-amino-acid chain; its full sequence is MNYFDNKIDQFATYLQKRNNLDHIQFLQVRLGMQVLAKNIGKLIVMYTLAYILNIFIFTLITNISFYLIRRYAHGAHAPSSFWCYIESITLFIVLPLLVLHFHINETLMMFLALLSVGVVIKYAPAATKKKPIPARLVKQKRYFSIIISTILFIITLFVKEPYTQFIQLGIIIQAITLLPIYYSKED.

5 helical membrane-spanning segments follow: residues 49 to 69 (LAYI…FYLI), 82 to 102 (FWCY…VLHF), 107 to 127 (TLMM…APAA), 143 to 163 (YFSI…KEPY), and 164 to 184 (TQFI…IYYS).

Belongs to the AgrB family.

The protein resides in the cell membrane. Essential for the production of a quorum sensing system signal molecule, the autoinducing peptide (AIP). This quorum sensing system is responsible for the regulation of the expression of virulence factor genes. Involved in the proteolytic processing of AgrD, the precursor of AIP. This Staphylococcus aureus (strain MRSA252) protein is Accessory gene regulator protein B.